Consider the following 642-residue polypeptide: Chaperone protein DnaK (642 aa).

T200 carries the post-translational modification Phosphothreonine; by autocatalysis. The segment covering 600–616 (EAAQQSAGAAGPMPGAP) has biased composition (low complexity). Positions 600–642 (EAAQQSAGAAGPMPGAPAEEEPSDGPRKAKGRVVDAEIVDDDK) are disordered. Residues 623–634 (DGPRKAKGRVVD) are compositionally biased toward basic and acidic residues.

The protein belongs to the heat shock protein 70 family.

Functionally, acts as a chaperone. This Akkermansia muciniphila (strain ATCC BAA-835 / DSM 22959 / JCM 33894 / BCRC 81048 / CCUG 64013 / CIP 107961 / Muc) protein is Chaperone protein DnaK.